The sequence spans 493 residues: Mitochondrial distribution and morphology protein 10 (493 aa).

Belongs to the MDM10 family. Component of the ER-mitochondria encounter structure (ERMES) or MDM complex, composed of MMM1, MDM10, MDM12 and MDM34. Associates with the mitochondrial outer membrane sorting assembly machinery SAM(core) complex, which consists of SAM35, SAM37 and SAM50, to form a SAM(holo) complex.

Its subcellular location is the mitochondrion outer membrane. In terms of biological role, component of the ERMES/MDM complex, which serves as a molecular tether to connect the endoplasmic reticulum and mitochondria. Components of this complex are involved in the control of mitochondrial shape and protein biogenesis and may function in phospholipid exchange. MDM10 is involved in the late assembly steps of the general translocase of the mitochondrial outer membrane (TOM complex). Functions in the TOM40-specific route of the assembly of outer membrane beta-barrel proteins, including the association of TOM40 with the receptor TOM22 and small TOM proteins. Can associate with the SAM(core) complex as well as the MDM12-MMM1 complex, both involved in late steps of the major beta-barrel assembly pathway, that is responsible for biogenesis of all outer membrane beta-barrel proteins. May act as a switch that shuttles between both complexes and channels precursor proteins into the TOM40-specific pathway. Plays a role in mitochondrial morphology and in the inheritance of mitochondria. In Saccharomyces cerevisiae (strain RM11-1a) (Baker's yeast), this protein is Mitochondrial distribution and morphology protein 10.